Reading from the N-terminus, the 99-residue chain is Class II hydrophobin 3 (99 aa).

The N-terminal stretch at Met1–Ala18 is a signal peptide. Cystine bridges form between Cys31–Cys79, Cys40–Cys70, and Cys41–Cys53.

The protein belongs to the cerato-ulmin hydrophobin family. In terms of assembly, homodimer. Homodimers further self-assemble to form highly ordered films at water-air interfaces through intermolecular interactions.

The protein resides in the secreted. The protein localises to the cell wall. Aerial growth, conidiation, and dispersal of filamentous fungi in the environment rely upon a capability of their secreting small amphipathic proteins called hydrophobins (HPBs) with low sequence identity. Class I can self-assemble into an outermost layer of rodlet bundles on aerial cell surfaces, conferring cellular hydrophobicity that supports fungal growth, development and dispersal; whereas Class II form highly ordered films at water-air interfaces through intermolecular interactions but contribute nothing to the rodlet structure. Hyd3 is a class II hydrophobin required for barley root colonization. Hyd1 and Hyd3 are jointly required for conidial hydrophobicity and dispersal, but seem not to be involved in mycelia hydrophobicity. Inhibits conidial germination in environments not suitable for mycelial growth. Plays probably a role in intraspecific signaling or hyphal fusion. The sequence is that of Class II hydrophobin 3 from Bionectria ochroleuca (Gliocladium roseum).